We begin with the raw amino-acid sequence, 121 residues long: Small ribosomal subunit protein uS13 (121 aa).

Residues 93-121 are disordered; it reads RGLPMRGQRTRTNARTRKGPRKSAAALKK.

Belongs to the universal ribosomal protein uS13 family. In terms of assembly, part of the 30S ribosomal subunit. Forms a loose heterodimer with protein S19. Forms two bridges to the 50S subunit in the 70S ribosome.

Functionally, located at the top of the head of the 30S subunit, it contacts several helices of the 16S rRNA. In the 70S ribosome it contacts the 23S rRNA (bridge B1a) and protein L5 of the 50S subunit (bridge B1b), connecting the 2 subunits; these bridges are implicated in subunit movement. Contacts the tRNAs in the A and P-sites. This is Small ribosomal subunit protein uS13 from Methylibium petroleiphilum (strain ATCC BAA-1232 / LMG 22953 / PM1).